The primary structure comprises 566 residues: SRSF protein kinase 3 (566 aa).

Residues 1–13 are compositionally biased toward gly residues; the sequence is MSASTGGGGGGDS. The interval 1 to 60 is disordered; sequence MSASTGGGGGGDSGSSSSSSSQASCGPEPSGSELAPPTPAPRMLQGLLGSDDEEQEDPKD. Low complexity predominate over residues 14 to 26; the sequence is GSSSSSSSQASCG. Residue serine 50 is modified to Phosphoserine. In terms of domain architecture, Protein kinase spans 79-564; that stretch reads YHVVRKLGWG…AADCLQHPWL (486 aa). ATP-binding positions include 85 to 93 and lysine 108; that span reads LGWGHFSTV. Aspartate 212 (proton acceptor) is an active-site residue. A compositionally biased stretch (polar residues) spans 236-254; it reads EWQQSGAPPPSRSTVSTAP. Disordered regions lie at residues 236 to 283 and 295 to 353; these read EWQQ…LLEE and EAAA…SGFS. The span at 263-278 shows a compositional bias: basic residues; sequence SKNKRKKMRRKRKQQK. Serine 329 carries the post-translational modification Phosphoserine. Residues 330-339 show a composition bias toward low complexity; the sequence is PASSSPAPGG. Over residues 344–353 the composition is skewed to polar residues; it reads SPGSQTSGFS.

It belongs to the protein kinase superfamily. As to expression, highly expressed in skeletal muscle, heart, uterus and parorchis. Weakly expressed in brain, stomach, small intestine and ovary.

It is found in the nucleus. It localises to the cytoplasm. It carries out the reaction L-seryl-[protein] + ATP = O-phospho-L-seryl-[protein] + ADP + H(+). The enzyme catalyses L-threonyl-[protein] + ATP = O-phospho-L-threonyl-[protein] + ADP + H(+). Its function is as follows. Serine/arginine-rich protein-specific kinase which specifically phosphorylates its substrates at serine residues located in regions rich in arginine/serine dipeptides, known as RS domains. Phosphorylates the SR splicing factor SRSF1 and the lamin-B receptor (LBR) in vitro. Required for normal muscle development. This Sus scrofa (Pig) protein is SRSF protein kinase 3 (SRPK3).